A 307-amino-acid chain; its full sequence is MSMILSASVIRVRDGLPLSASTDYEQSTGMQECRKYFKMLSRKLAQLPDRCTLKTGHYNINFISSLGVSYMMLCTENYPNVLAFSFLDELQKEFITTYNMMKTNTAVRPYCFIEFDNFIQRTKQRYNNPRSLSTKINLSDMQTEIKLRPPYQISMCELGSANGVTSAFSVDCKGAGKISSAHQRLEPATLSGIVGFILSLLCGALNLIRGFHAIESLLQSDGDDFNYIIAFFLGTAACLYQCYLLVYYTGWRNVKSFLTFGLICLCNMYLYELRNLWQLFFHVTVGAFVTLQIWLRQAQGKAPDYDV.

Ser2 bears the N-acetylserine mark. Residues 2–187 are Cytoplasmic-facing; it reads SMILSASVIR…ISSAHQRLEP (186 aa). 2 positions are modified to phosphoserine: Ser6 and Ser8. The Longin domain occupies 8-119; sequence SVIRVRDGLP…YCFIEFDNFI (112 aa). Residues 188–208 form a helical membrane-spanning segment; the sequence is ATLSGIVGFILSLLCGALNLI. Residues 209-226 are Lumenal-facing; sequence RGFHAIESLLQSDGDDFN. Residues 227–247 form a helical membrane-spanning segment; sequence YIIAFFLGTAACLYQCYLLVY. Over 248–253 the chain is Cytoplasmic; the sequence is YTGWRN. The chain crosses the membrane as a helical span at residues 254–271; the sequence is VKSFLTFGLICLCNMYLY. Residues 272-274 lie on the Lumenal side of the membrane; sequence ELR. Residues 275–295 form a helical membrane-spanning segment; the sequence is NLWQLFFHVTVGAFVTLQIWL. The Cytoplasmic segment spans residues 296–307; sequence RQAQGKAPDYDV.

It belongs to the synaptobrevin family.

It is found in the endoplasmic reticulum membrane. Functionally, may be involved in vesicle transport between the ER and the Golgi complex. This is Vesicle-trafficking protein SEC22a (SEC22A) from Homo sapiens (Human).